The chain runs to 1785 residues: 1,3-beta-glucan synthase component FKS3 (1785 aa).

8 helical membrane passes run 337–357 (FWIIHFAPFWFFTTFNSPTLY), 375–395 (LSVIAFGGTIACLVQILATVF), 415–435 (IGLLFCLAINLGPSVYVLGFF), 444–464 (AYIVSIVQLIIAFLTTFFFAV), 508–528 (LWVFVYLAKYIESYFFLTLSL), 547–567 (YLLGPILCKWQAKITLVLMLL), 572–592 (LFFLDTYLWYIICNCIFSIVL), and 712–732 (LATPISEPVPVDCMPTFTVLV). 2 stretches are compositionally biased toward basic and acidic residues: residues 791–801 (ESSHDEDRLEI) and 815–824 (DHTESRKLPT). Residues 791–824 (ESSHDEDRLEIPDALYDPRSSPLSDHTESRKLPT) are disordered. 5 N-linked (GlcNAc...) asparagine glycosylation sites follow: N844, N874, N955, N1002, and N1170. The next 3 helical transmembrane spans lie at 1215 to 1235 (LFISFSVQLFFVLLLNLGALN), 1268 to 1288 (VSIFVLSIFIVFFIAFAPLLI), and 1303 to 1323 (FLHHLLSMAPLFEVFVCQVYS). N-linked (GlcNAc...) asparagine glycosylation occurs at N1360. A run of 5 helical transmembrane segments spans residues 1370–1390 (FFMLLFAIISMWQPALLWFWI), 1394–1414 (SMCFAPFIFNPHQFAFMDFFI), 1475–1495 (FAELFLPFCVFLFNFTAFSFI), 1514–1534 (LLVTFLPIFLNSIVLFLLFWV), and 1549–1569 (AGAVIAFIAHTFSVLVYLLDF). The N-linked (GlcNAc...) asparagine glycan is linked to N1579. A run of 3 helical transmembrane segments spans residues 1585–1605 (ILLITCINMHLILFKVFTTIF), 1655–1675 (FFLGHFLLFIQTPIILLPFID), and 1713–1733 (FSLYFVMLGVLLFMLIAPFFA). An N-linked (GlcNAc...) asparagine glycan is attached at N1761.

Belongs to the glycosyltransferase 48 family. Post-translationally, N-glycosylated.

It localises to the mitochondrion. The protein localises to the membrane. It catalyses the reaction [(1-&gt;3)-beta-D-glucosyl](n) + UDP-alpha-D-glucose = [(1-&gt;3)-beta-D-glucosyl](n+1) + UDP + H(+). Its function is as follows. Required for spore wall assembly. The polypeptide is 1,3-beta-glucan synthase component FKS3 (FKS3) (Saccharomyces cerevisiae (strain ATCC 204508 / S288c) (Baker's yeast)).